A 159-amino-acid polypeptide reads, in one-letter code: Eukaryotic translation initiation factor 5A (159 aa).

At K55 the chain carries Hypusine.

This sequence belongs to the eIF-5A family. Post-translationally, lys-55 undergoes hypusination, a unique post-translational modification that consists in the addition of a butylamino group from spermidine to lysine side chain, leading to the formation of the unusual amino acid hypusine. eIF-5As are the only known proteins to undergo this modification, which is essential for their function.

The protein localises to the cytoplasm. Functionally, translation factor that promotes translation elongation and termination, particularly upon ribosome stalling at specific amino acid sequence contexts. Binds between the exit (E) and peptidyl (P) site of the ribosome and promotes rescue of stalled ribosome: specifically required for efficient translation of polyproline-containing peptides as well as other motifs that stall the ribosome. Acts as a ribosome quality control (RQC) cofactor by joining the RQC complex to facilitate peptidyl transfer during CAT tailing step. This chain is Eukaryotic translation initiation factor 5A (eif5a), found in Dictyostelium discoideum (Social amoeba).